Here is a 101-residue protein sequence, read N- to C-terminus: Small ribosomal subunit protein uS14 (101 aa).

The protein belongs to the universal ribosomal protein uS14 family. As to quaternary structure, part of the 30S ribosomal subunit. Contacts proteins S3 and S10.

Its function is as follows. Binds 16S rRNA, required for the assembly of 30S particles and may also be responsible for determining the conformation of the 16S rRNA at the A site. The chain is Small ribosomal subunit protein uS14 from Chlamydia trachomatis serovar L2 (strain ATCC VR-902B / DSM 19102 / 434/Bu).